The sequence spans 425 residues: Glyco-Gag protein (425 aa).

Residues 1–54 (MSRASSGTATGARLFGISSVLGEYRVLIGDEGAGPSRSPSEVSFSVWYRSRAAR) lie on the Cytoplasmic side of the membrane. Residues 55–75 (LVIVCLVASFLVPCLTFLIAE) form a helical membrane-spanning segment. Residues 76-425 (TVMGQTITTP…VVQGKEETPA (350 aa)) are Extracellular-facing. Residue Asn137 is glycosylated (N-linked (GlcNAc...) asparagine; by host). The tract at residues 174–285 (VRPFLPPPKP…LREGPNNRPQ (112 aa)) is disordered. Over residues 177–196 (FLPPPKPPTSLPQPLSPQPS) the composition is skewed to pro residues. The segment covering 197-209 (APLTSSLYPVLPK) has biased composition (low complexity). 2 stretches are compositionally biased toward pro residues: residues 213–223 (PKPPVLPPDPS) and 233–248 (EPPP…PSGP).

In terms of processing, glycosylated by host. Cleaved by host near the middle of the molecule, releasing the c-terminal half containing capsid and nucleoprotein domains op GAG.

The protein resides in the host cell membrane. In terms of biological role, plays a role in viral particle release. Presumably acts by facilitating the fission of the virion bud at the cell surface. The polypeptide is Glyco-Gag protein (Felidae (cat family)).